The primary structure comprises 454 residues: Protein disulfide-isomerase TMX3 (454 aa).

Positions 1–24 are cleaved as a signal peptide; that stretch reads MAAWKSWTALRLCATVVVLDMVVC. The Thioredoxin domain maps to 25 to 128; the sequence is KGFVEDLDES…KDDIIEFAHR (104 aa). Topologically, residues 25–375 are lumenal; the sequence is KGFVEDLDES…TIVSIFKSSP (351 aa). Residues Cys53 and Cys56 each act as nucleophile in the active site. Residues Cys53 and Cys56 are joined by a disulfide bond. Asn258 and Asn313 each carry an N-linked (GlcNAc...) asparagine glycan. The helical transmembrane segment at 376–396 threads the bilayer; it reads LMGCFLFGLPLGVISIMCYGI. Residues 397–454 lie on the Cytoplasmic side of the membrane; that stretch reads YTADTDGGYIEERYEVSKSENENQEQIEESKEQQEPSSGGSVVPTVQEPKDVLEKKKD. A disordered region spans residues 412 to 454; the sequence is VSKSENENQEQIEESKEQQEPSSGGSVVPTVQEPKDVLEKKKD. Residues 444-454 are compositionally biased toward basic and acidic residues; sequence EPKDVLEKKKD. The Di-lysine motif motif lies at 451–454; it reads KKKD.

It belongs to the protein disulfide isomerase family. In terms of processing, N-glycosylated. As to expression, widely expressed. Expressed in brain, testis, lung, skin, kidney, uterus, bone, stomach, liver, prostate, placenta, eye and muscle.

It is found in the endoplasmic reticulum membrane. It carries out the reaction Catalyzes the rearrangement of -S-S- bonds in proteins.. Probable disulfide isomerase, which participates in the folding of proteins containing disulfide bonds. May act as a dithiol oxidase. Acts as a regulator of endoplasmic reticulum-mitochondria contact sites via its ability to regulate redox signals. This is Protein disulfide-isomerase TMX3 (TMX3) from Homo sapiens (Human).